The sequence spans 63 residues: Metallothionein-2 (63 aa).

Positions 1-30 (MDPQDCTCAAGDSCSCAGSCKCKNCRCQSC) are beta. The a divalent metal cation site is built by Cys-6, Cys-8, Cys-14, Cys-16, Cys-20, Cys-22, Cys-25, Cys-27, Cys-30, Cys-34, Cys-35, Cys-37, Cys-38, Cys-42, Cys-45, Cys-49, Cys-51, Cys-59, Cys-61, and Cys-62. Residues 31–63 (RKSCCSCCPASCSNCAKGCVCKEPSSSKCSCCH) form an alpha region.

The protein belongs to the metallothionein superfamily. Type 1 family.

In terms of biological role, metallothioneins have a high content of cysteine residues that bind various heavy metals. This chain is Metallothionein-2, found in Columba livia (Rock dove).